The following is a 388-amino-acid chain: Na(+)/H(+) antiporter NhaA (388 aa).

Residues 1–11 (MKHLHRFFSSD) lie on the Cytoplasmic side of the membrane. The helical transmembrane segment at 12-31 (ASGGIILIIAAILAMIMANS) threads the bilayer. Residues 32–58 (GATSGWYHDFLETPVQLRVGSLEINKN) lie on the Periplasmic side of the membrane. A helical membrane pass occupies residues 59 to 80 (MLLWINDALMAVFFLLVGLEVK). Residues 81–96 (RELMQGSLASLLQAAF) lie on the Cytoplasmic side of the membrane. Residues 97–116 (PVIAAIGGMIVPALLYLAFN) traverse the membrane as a helical segment. Topologically, residues 117–122 (YADPIT) are periplasmic. A helical membrane pass occupies residues 123–130 (REGWAIPA). The Cytoplasmic portion of the chain corresponds to 131 to 154 (ATDIAFALGVLALLGSRVPLVLKI). Residues 155 to 176 (FLMALAIIDDLGAIIIIALFYT) traverse the membrane as a helical segment. The Periplasmic portion of the chain corresponds to 177 to 180 (NDLS). The chain crosses the membrane as a helical span at residues 181 to 200 (MASLGVAAVAIAVLAVLNLC). Residues 201–204 (GVRR) lie on the Cytoplasmic side of the membrane. A helical membrane pass occupies residues 205 to 222 (TGVYILVGVVLWTAVLKS). A topological domain (periplasmic) is located at residue Gly223. Residues 224–236 (VHATLAGVIVGFF) traverse the membrane as a helical segment. Residues 237-253 (IPLKEKHGRSPAKRLEH) lie on the Cytoplasmic side of the membrane. Residues 254–272 (VLHPWVAYLILPLFAFANA) form a helical membrane-spanning segment. Topologically, residues 273-286 (GVSLQGVTLDGLTS) are periplasmic. Residues 287–310 (ILPLGIIAGLLIGKPLGISLFCWL) form a helical membrane-spanning segment. Residues 311–339 (ALRLKLAHLPEGTTYQQIMVVGILCGIGF) lie on the Cytoplasmic side of the membrane. Residues 340–350 (TMSIFIASLAF) form a helical membrane-spanning segment. Over 351-357 (GSVDPEL) the chain is Periplasmic. Residues 358–380 (INWAKLGILVGSISSAVIGYSWL) form a helical membrane-spanning segment. The Cytoplasmic portion of the chain corresponds to 381 to 388 (RVRLRPSV).

Belongs to the NhaA Na(+)/H(+) (TC 2.A.33) antiporter family.

The protein localises to the cell inner membrane. The catalysed reaction is Na(+)(in) + 2 H(+)(out) = Na(+)(out) + 2 H(+)(in). In terms of biological role, na(+)/H(+) antiporter that extrudes sodium in exchange for external protons. The chain is Na(+)/H(+) antiporter NhaA from Shigella flexneri serotype 5b (strain 8401).